Here is a 69-residue protein sequence, read N- to C-terminus: DNA gyrase inhibitor YacG (69 aa).

Zn(2+)-binding residues include C13, C16, C32, and C36.

The protein belongs to the DNA gyrase inhibitor YacG family. Interacts with GyrB. Requires Zn(2+) as cofactor.

Inhibits all the catalytic activities of DNA gyrase by preventing its interaction with DNA. Acts by binding directly to the C-terminal domain of GyrB, which probably disrupts DNA binding by the gyrase. This chain is DNA gyrase inhibitor YacG, found in Neisseria meningitidis serogroup B (strain ATCC BAA-335 / MC58).